The primary structure comprises 663 residues: MAHLRSPSGFGDPGKKDQKESEEELEEEEEEEEVEEEEEEVEEEEEEVEEEEEEVVEEELVGEEQELEAPETFSEEYLWKVTDIGDYDDDFPDVRPRLASIVSPSLTSTFVPSQSATSTETPSASPPSSTSSHKSFPKIFQTFRKDMSEMSIDRNIHRNLSPGIPVSVQTEESWLQDLSDKVQSRKKASKEKAEPECLASKLREKWVINPEESKLNILYELEFKEDFITLFEPSLRTLPSIGPPSILAYKEESSNLGINFKDEEEETSPKCEFCGSDLRAFFSNVDVSSEPKGHASCCIAFQNLIDYIYEEQIKTKPPKAELIAIDPHAAHGSEVDRLKAKEKALQRKQEQRMARHFAIISREQTHFSEDDSKRLKTISYQLSVDIPEKQIIDDIVFDFQLRNSNMSIICCDSRIACGKVVRNELLEKHYKHGSKFLTSFPDGTTQIFYPSGNLAIIRVPNKVNGFTCIVQEDMPTNPAILAVLDSSGRSSCYHPNGNVWVYINILGGQYSDQAGNRIRAWNWSNSITSSPFVSFKPVFLALNRYIGVRILEQDKISITFLAMGQQARISVGTKVKLPNPEEIPILRYVSGDDLLLLASLIKIRRLFHKLEGCVNFPSSQVWEKLKQPSYLSSLSLKLIALCHSSGIKQDIMKTIRNIINEEI.

2 disordered regions span residues 1-74 (MAHL…ETFS) and 106-136 (LTSTFVPSQSATSTETPSASPPSSTSSHKSF). Residues 20–69 (ESEEELEEEEEEEEVEEEEEEVEEEEEEVEEEEEEVVEEELVGEEQELEA) show a composition bias toward acidic residues. The span at 112 to 132 (PSQSATSTETPSASPPSSTSS) shows a compositional bias: low complexity.

The protein belongs to the ERICH6 family.

It localises to the nucleus. The sequence is that of Glutamate-rich protein 6 (ERICH6) from Homo sapiens (Human).